The sequence spans 225 residues: Leucyl/phenylalanyl-tRNA--protein transferase (225 aa).

This sequence belongs to the L/F-transferase family.

It is found in the cytoplasm. The enzyme catalyses N-terminal L-lysyl-[protein] + L-leucyl-tRNA(Leu) = N-terminal L-leucyl-L-lysyl-[protein] + tRNA(Leu) + H(+). It catalyses the reaction N-terminal L-arginyl-[protein] + L-leucyl-tRNA(Leu) = N-terminal L-leucyl-L-arginyl-[protein] + tRNA(Leu) + H(+). The catalysed reaction is L-phenylalanyl-tRNA(Phe) + an N-terminal L-alpha-aminoacyl-[protein] = an N-terminal L-phenylalanyl-L-alpha-aminoacyl-[protein] + tRNA(Phe). Its function is as follows. Functions in the N-end rule pathway of protein degradation where it conjugates Leu, Phe and, less efficiently, Met from aminoacyl-tRNAs to the N-termini of proteins containing an N-terminal arginine or lysine. The chain is Leucyl/phenylalanyl-tRNA--protein transferase from Gluconobacter oxydans (strain 621H) (Gluconobacter suboxydans).